Consider the following 265-residue polypeptide: MSRIQSTFAALAAKNKKGLIPFITAGDPAPDLTVPLMHALVAGGADILELGVPFSDPMAEGPVIQRACERALKFNVSLHDVLGFVSEFRKTDTTTPVVLMGYANPIERMGQTAFVLAAKAAGVDGTIVVDYPPEECEEFAATLKANDMDPIFLLSPTSTEERIQQVAKFGSGFSYYVSLKGVTGSANIDTQDVAQRIEAIRKHVKLPIGVGFGIRDAATAKAVATVSDAVVIGSRIIQELENTPRERAVEAAQTFISGIRKALDE.

Active-site proton acceptor residues include Glu-49 and Glu-60.

It belongs to the TrpA family. In terms of assembly, tetramer of two alpha and two beta chains.

The catalysed reaction is (1S,2R)-1-C-(indol-3-yl)glycerol 3-phosphate + L-serine = D-glyceraldehyde 3-phosphate + L-tryptophan + H2O. The protein operates within amino-acid biosynthesis; L-tryptophan biosynthesis; L-tryptophan from chorismate: step 5/5. The alpha subunit is responsible for the aldol cleavage of indoleglycerol phosphate to indole and glyceraldehyde 3-phosphate. The chain is Tryptophan synthase alpha chain from Herminiimonas arsenicoxydans.